A 553-amino-acid polypeptide reads, in one-letter code: 3-amino-2-hydroxy-4-methoxybenzoate diazotase (553 aa).

Residues 157–167 (ALPAAGATGPA) show a composition bias toward low complexity. The disordered stretch occupies residues 157-178 (ALPAAGATGPAREGDAPPPAPV).

It belongs to the ATP-dependent AMP-binding enzyme family.

The catalysed reaction is 3-amino-2-hydroxy-4-methoxybenzoate + nitrite + ATP = cremeomycin + AMP + diphosphate + H2O. It functions in the pathway antibiotic biosynthesis. Part of a gene cluster involved in the biosynthesis of cremeomycin, a light-sensitive o-diazoquinone with antibacterial and antiproliferative effects. Catalyzes the last step of cremeomycin biosynthesis, the diazotization of 3-amino-2-hydroxy-4-methoxybenzoate (3,2,4-AHMBA) with nitrite to generate cremeomycin. The sequence is that of 3-amino-2-hydroxy-4-methoxybenzoate diazotase from Streptomyces cremeus.